Here is a 294-residue protein sequence, read N- to C-terminus: Serine/threonine-protein kinase Aurora-1 (294 aa).

The Protein kinase domain maps to 31 to 282 (FDIGKPLGRG…LHKLLEHPWI (252 aa)). ATP is bound by residues 37–45 (LGRGKFGHV) and Lys-60. Residue Asp-154 is the Proton acceptor of the active site. Phosphoserine is present on Ser-176. At Thr-185 the chain carries Phosphothreonine.

Belongs to the protein kinase superfamily. Ser/Thr protein kinase family. Aurora subfamily. Interacts with TPX2. Phosphorylation at Thr-185 may regulate activity and degradation of AUR1 in a cell cycle dependent manner. Abundant in roots, flowers and flower buds, low or absent in expanded leaves, stems and siliques.

It is found in the nucleus membrane. The protein resides in the cytoplasm. The protein localises to the cytoskeleton. It localises to the spindle. Its subcellular location is the spindle pole. It is found in the phragmoplast. The catalysed reaction is L-seryl-[protein] + ATP = O-phospho-L-seryl-[protein] + ADP + H(+). The enzyme catalyses L-threonyl-[protein] + ATP = O-phospho-L-threonyl-[protein] + ADP + H(+). Phosphorylates specifically 'Ser-10' of histone H3 in vitro and colocalizes with phosphorylated histone H3 during mitosis. Associates with cytoskeletal structures that are necessary for cytokinesis and with the microtubule spindle. Also colocalizes with gamma-tubulin and function in microtubule organizing centers (MTOCs). In contrast with the mammalian B-type Aurora, AUR1 has no kinase activity toward 'Ser-28' of histone H3. This Arabidopsis thaliana (Mouse-ear cress) protein is Serine/threonine-protein kinase Aurora-1 (AUR1).